The primary structure comprises 459 residues: UDP-N-acetylmuramoylalanine--D-glutamate ligase (459 aa).

Residue 120 to 126 participates in ATP binding; the sequence is GSNGKTT.

The protein belongs to the MurCDEF family.

It localises to the cytoplasm. It catalyses the reaction UDP-N-acetyl-alpha-D-muramoyl-L-alanine + D-glutamate + ATP = UDP-N-acetyl-alpha-D-muramoyl-L-alanyl-D-glutamate + ADP + phosphate + H(+). Its pathway is cell wall biogenesis; peptidoglycan biosynthesis. Cell wall formation. Catalyzes the addition of glutamate to the nucleotide precursor UDP-N-acetylmuramoyl-L-alanine (UMA). The sequence is that of UDP-N-acetylmuramoylalanine--D-glutamate ligase from Lactobacillus acidophilus (strain ATCC 700396 / NCK56 / N2 / NCFM).